A 175-amino-acid polypeptide reads, in one-letter code: Diacylglycerol kinase (175 aa).

The next 2 helical transmembrane spans lie at 55 to 75 and 96 to 116; these read VAPN…YAFA and LLHL…LVMI. The Proton acceptor role is filled by Glu-118. Residue Glu-125 participates in a divalent metal cation binding. A helical transmembrane segment spans residues 151–171; sequence VLLAAIAAVIVGGCLLLPPLL.

Belongs to the bacterial diacylglycerol kinase family. Requires Mg(2+) as cofactor.

It is found in the cell membrane. It catalyses the reaction a 1,2-diacyl-sn-glycerol + ATP = a 1,2-diacyl-sn-glycero-3-phosphate + ADP + H(+). Its function is as follows. Catalyzes the ATP-dependent phosphorylation of sn-l,2-diacylglycerol (DAG) to phosphatidic acid. The protein is Diacylglycerol kinase (dgkA) of Synechocystis sp. (strain ATCC 27184 / PCC 6803 / Kazusa).